The primary structure comprises 146 residues: Hemoglobin subunit beta-0 (146 aa).

Positions 2 to 146 (EWTDFERATI…VVSSLGRQYH (145 aa)) constitute a Globin domain. Heme b-binding residues include His63 and His92.

This sequence belongs to the globin family. As to quaternary structure, heterotetramer of two alpha chains and two beta chains. Red blood cells.

In terms of biological role, involved in oxygen transport from gills to the various peripheral tissues. In Pagothenia borchgrevinki (Bald rockcod), this protein is Hemoglobin subunit beta-0 (hbb0).